The following is a 189-amino-acid chain: Large ribosomal subunit protein uL5 (189 aa).

The protein belongs to the universal ribosomal protein uL5 family. As to quaternary structure, part of the 50S ribosomal subunit; part of the 5S rRNA/L5/L18/L25 subcomplex. Contacts the 5S rRNA and the P site tRNA. Forms a bridge to the 30S subunit in the 70S ribosome.

Its function is as follows. This is one of the proteins that bind and probably mediate the attachment of the 5S RNA into the large ribosomal subunit, where it forms part of the central protuberance. In the 70S ribosome it contacts protein S13 of the 30S subunit (bridge B1b), connecting the 2 subunits; this bridge is implicated in subunit movement. Contacts the P site tRNA; the 5S rRNA and some of its associated proteins might help stabilize positioning of ribosome-bound tRNAs. The polypeptide is Large ribosomal subunit protein uL5 (Kineococcus radiotolerans (strain ATCC BAA-149 / DSM 14245 / SRS30216)).